The sequence spans 222 residues: Vesicle-associated membrane protein 724 (222 aa).

At 1–197 the chain is on the cytoplasmic side; that stretch reads MGQESFIYSF…LWYQNMKIKL (197 aa). Residues 10-115 form the Longin domain; it reads FVARGTMILA…SLNKEFGPVM (106 aa). In terms of domain architecture, v-SNARE coiled-coil homology spans 131-191; sequence KLIKVKAQVS…TQVRRKLWYQ (61 aa). The helical; Anchor for type IV membrane protein transmembrane segment at 198–218 threads the bilayer; sequence VVLGILLLLVLIIWISVCHGF. Topologically, residues 219-222 are vesicular; that stretch reads NCTD.

It belongs to the synaptobrevin family. Expressed in flowers, leaves, stems and roots.

It is found in the cell membrane. The protein localises to the early endosome membrane. Functionally, involved in the targeting and/or fusion of transport vesicles to their target membrane. The chain is Vesicle-associated membrane protein 724 from Arabidopsis thaliana (Mouse-ear cress).